Reading from the N-terminus, the 234-residue chain is Glycerol-3-phosphate acyltransferase (234 aa).

6 helical membrane-spanning segments follow: residues leucine 4 to glycine 24, threonine 56 to phenylalanine 76, valine 90 to alanine 110, alanine 122 to leucine 142, valine 152 to phenylalanine 172, and phenylalanine 191 to isoleucine 211.

Belongs to the PlsY family. As to quaternary structure, probably interacts with PlsX.

It is found in the cell inner membrane. The enzyme catalyses an acyl phosphate + sn-glycerol 3-phosphate = a 1-acyl-sn-glycero-3-phosphate + phosphate. It functions in the pathway lipid metabolism; phospholipid metabolism. Its function is as follows. Catalyzes the transfer of an acyl group from acyl-phosphate (acyl-PO(4)) to glycerol-3-phosphate (G3P) to form lysophosphatidic acid (LPA). This enzyme utilizes acyl-phosphate as fatty acyl donor, but not acyl-CoA or acyl-ACP. This chain is Glycerol-3-phosphate acyltransferase, found in Chlorobium chlorochromatii (strain CaD3).